A 130-amino-acid polypeptide reads, in one-letter code: Protachykinin-1 (130 aa).

The first 19 residues, 1 to 19, serve as a signal peptide directing secretion; that stretch reads MKILVAVAVFFLVSTQLFA. Positions 20 to 56 are excised as a propeptide; sequence EEIDANDDLNYWSDWSDSDQIKEAMPEPFEHLLQRIA. Methionine amide occurs at positions 68 and 107.

It belongs to the tachykinin family. The substance P form is cleaved at Pro-59 by the prolyl endopeptidase FAP (seprase) activity (in vitro). Substance P is also cleaved and degraded by Angiotensin-converting enzyme (ACE) and neprilysin (MME).

Its subcellular location is the secreted. Its function is as follows. Tachykinins are active peptides which excite neurons, evoke behavioral responses, are potent vasodilators and secretagogues, and contract (directly or indirectly) many smooth muscles. The polypeptide is Protachykinin-1 (Tac1) (Mus musculus (Mouse)).